Here is a 1002-residue protein sequence, read N- to C-terminus: Calcium-transporting ATPase sarcoplasmic/endoplasmic reticulum type (1002 aa).

The Cytoplasmic portion of the chain corresponds to 1–48 (MEDGHSKTVEQSLNFFGTDGERGLTLDQIKTNQAKYGPNELPTEEGKS). A helical membrane pass occupies residues 49–69 (IWQLVLEQFDDLLVKILLLAA). Over 70–89 (IISFVLALFEEHEETFTAFV) the chain is Lumenal. The helical transmembrane segment at 90 to 110 (EPLVILLILIANAVVGVWQER) threads the bilayer. Residues 111–253 (NAESAIEALK…EIKTPLQQKL (143 aa)) lie on the Cytoplasmic side of the membrane. Residues 254-273 (DEFGEQLSKVISVICVAVWA) form a helical membrane-spanning segment. The Lumenal segment spans residues 274 to 295 (INIGHFNDPAHGGSWIKGAIYY). A helical transmembrane segment spans residues 296–313 (FKIAVALAVAAIPEGLPA). Ca(2+) is bound by residues Val-304, Ala-305, Ile-307, and Glu-309. At 314–757 (VITTCLALGT…EEGRAIYNNM (444 aa)) the chain is on the cytoplasmic side. The active-site 4-aspartylphosphate intermediate is the Asp-351. Mg(2+) is bound by residues Asp-703 and Asp-707. Residues 758-777 (KQFIRYLISSNIGEVVSIFL) form a helical membrane-spanning segment. Ca(2+) is bound by residues Asn-768 and Glu-771. The Lumenal portion of the chain corresponds to 778–787 (TAALGLPEAL). Residues 788–808 (IPVQLLWVNLVTDGLPATALG) form a helical membrane-spanning segment. Ca(2+) is bound by residues Asn-796, Thr-799, and Asp-800. Residues 809–828 (FNPPDLDIMDKPPRKADEGL) are Cytoplasmic-facing. The helical transmembrane segment at 829-851 (ISGWLFFRYMAIGFYVGAATVGA) threads the bilayer. Residues 852-897 (AAWWFIASSEGPGLTYWQLTHHLSCLGGGDEFKGVDCKIFSDPKAM) are Lumenal-facing. The helical transmembrane segment at 898 to 917 (TMALSVLVTIEMLNAMNSLS) threads the bilayer. A Ca(2+)-binding site is contributed by Glu-908. At 918–930 (ENQSLISMPPWCN) the chain is on the cytoplasmic side. The helical transmembrane segment at 931 to 949 (LWLIGSMALSFTLHFVILY) threads the bilayer. The Lumenal segment spans residues 950–964 (VDVLSTVFQVTPLSA). A helical transmembrane segment spans residues 965 to 985 (EEWITVMKFSIPVVLLDETLK). The Cytoplasmic portion of the chain corresponds to 986 to 1002 (FVARKIADVPDAVVDKW).

Belongs to the cation transport ATPase (P-type) (TC 3.A.3) family.

Its subcellular location is the endoplasmic reticulum membrane. It is found in the sarcoplasmic reticulum membrane. The catalysed reaction is Ca(2+)(in) + ATP + H2O = Ca(2+)(out) + ADP + phosphate + H(+). This magnesium-dependent enzyme catalyzes the hydrolysis of ATP coupled with the transport of calcium. In Drosophila pseudoobscura pseudoobscura (Fruit fly), this protein is Calcium-transporting ATPase sarcoplasmic/endoplasmic reticulum type.